Reading from the N-terminus, the 247-residue chain is 2,3-bisphosphoglycerate-dependent phosphoglycerate mutase (247 aa).

Residues 8–15, 21–22, R60, 87–90, K98, 114–115, and 183–184 each bind substrate; these read RHGESQWN, TG, ERHY, RR, and GN. The Tele-phosphohistidine intermediate role is filled by H9. E87 serves as the catalytic Proton donor/acceptor.

Belongs to the phosphoglycerate mutase family. BPG-dependent PGAM subfamily.

The catalysed reaction is (2R)-2-phosphoglycerate = (2R)-3-phosphoglycerate. It participates in carbohydrate degradation; glycolysis; pyruvate from D-glyceraldehyde 3-phosphate: step 3/5. In terms of biological role, catalyzes the interconversion of 2-phosphoglycerate and 3-phosphoglycerate. This chain is 2,3-bisphosphoglycerate-dependent phosphoglycerate mutase, found in Chlorobium phaeovibrioides (strain DSM 265 / 1930) (Prosthecochloris vibrioformis (strain DSM 265)).